The sequence spans 65 residues: Large ribosomal subunit protein bL35 (65 aa).

The segment covering 1-16 (MPKMKTHRASAKRFKK) has biased composition (basic residues). The interval 1 to 24 (MPKMKTHRASAKRFKKTANGGLKS) is disordered.

It belongs to the bacterial ribosomal protein bL35 family.

This Leuconostoc mesenteroides subsp. mesenteroides (strain ATCC 8293 / DSM 20343 / BCRC 11652 / CCM 1803 / JCM 6124 / NCDO 523 / NBRC 100496 / NCIMB 8023 / NCTC 12954 / NRRL B-1118 / 37Y) protein is Large ribosomal subunit protein bL35.